Here is a 466-residue protein sequence, read N- to C-terminus: tRNA-2-methylthio-N(6)-dimethylallyladenosine synthase (466 aa).

The 121-residue stretch at 3–123 folds into the MTTase N-terminal domain; the sequence is KKLYIKTYGC…LPEMVARAVR (121 aa). [4Fe-4S] cluster-binding residues include Cys12, Cys48, Cys86, Cys162, Cys166, and Cys169. A Radical SAM core domain is found at 148–381; the sequence is SPAGPSAFLS…QQLLTAQQTA (234 aa). Positions 384–446 constitute a TRAM domain; the sequence is TACVGRVQPV…ANSLSGTVVV (63 aa).

This sequence belongs to the methylthiotransferase family. MiaB subfamily. In terms of assembly, monomer. The cofactor is [4Fe-4S] cluster.

The protein localises to the cytoplasm. The catalysed reaction is N(6)-dimethylallyladenosine(37) in tRNA + (sulfur carrier)-SH + AH2 + 2 S-adenosyl-L-methionine = 2-methylsulfanyl-N(6)-dimethylallyladenosine(37) in tRNA + (sulfur carrier)-H + 5'-deoxyadenosine + L-methionine + A + S-adenosyl-L-homocysteine + 2 H(+). Its function is as follows. Catalyzes the methylthiolation of N6-(dimethylallyl)adenosine (i(6)A), leading to the formation of 2-methylthio-N6-(dimethylallyl)adenosine (ms(2)i(6)A) at position 37 in tRNAs that read codons beginning with uridine. The chain is tRNA-2-methylthio-N(6)-dimethylallyladenosine synthase from Rhodospirillum centenum (strain ATCC 51521 / SW).